The sequence spans 545 residues: GPI transamidase component PIG-T homolog (545 aa).

The N-terminal stretch at 1–22 (MKKNGCLLLFAYSLLSFSLTAA) is a signal peptide. At 23–493 (TIDETYDESL…PTPDFSMPYN (471 aa)) the chain is on the lumenal side. 5 N-linked (GlcNAc...) asparagine glycosylation sites follow: asparagine 168, asparagine 227, asparagine 336, asparagine 391, and asparagine 467. A helical transmembrane segment spans residues 494 to 514 (VIIFTSTVIALTFGGIFNLLT). The Cytoplasmic segment spans residues 515 to 545 (RRFVPQQSKFQNRQPSMLQRLKEKIFHKKRG).

This sequence belongs to the PIGT family. In terms of assembly, forms a complex with PIG-S homolog, PIG-U homolog and GPI8. In terms of processing, the disulfide bond between PIGK/GPI8 and PIGT is important for normal enzyme activity.

Its subcellular location is the endoplasmic reticulum membrane. Its pathway is glycolipid biosynthesis; glycosylphosphatidylinositol-anchor biosynthesis. Functionally, component of the GPI transamidase complex. Involved in transfer of GPI to proteins. The protein is GPI transamidase component PIG-T homolog (gpi16) of Schizosaccharomyces pombe (strain 972 / ATCC 24843) (Fission yeast).